The chain runs to 629 residues: Extracellular metalloproteinase 10 (629 aa).

Residues 1-19 (MHGLLLAAGLLSLPLYTIA) form the signal peptide. A propeptide spanning residues 20–240 (HTQPSGALSR…VHNVVDYVAH (221 aa)) is cleaved from the precursor. 2 N-linked (GlcNAc...) asparagine glycosylation sites follow: Asn-281 and Asn-331. His-424 is a Zn(2+) binding site. Glu-425 is a catalytic residue. His-428 contacts Zn(2+). 2 N-linked (GlcNAc...) asparagine glycosylation sites follow: Asn-469 and Asn-617.

The protein belongs to the peptidase M36 family. It depends on Zn(2+) as a cofactor.

Its subcellular location is the secreted. In terms of biological role, secreted metalloproteinase that allows assimilation of proteinaceous substrates and probably acts as a virulence factor. The polypeptide is Extracellular metalloproteinase 10 (MEP10) (Coccidioides posadasii (strain C735) (Valley fever fungus)).